A 341-amino-acid polypeptide reads, in one-letter code: Glycerol-3-phosphate dehydrogenase [NAD(P)+] (341 aa).

The NADPH site is built by Ser11, Trp12, Arg33, and Lys106. The sn-glycerol 3-phosphate site is built by Lys106, Gly137, and Ser139. Ala141 contributes to the NADPH binding site. The sn-glycerol 3-phosphate site is built by Lys192, Asp245, Ser255, Arg256, and Asn257. Residue Lys192 is the Proton acceptor of the active site. Arg256 contacts NADPH. NADPH is bound by residues Val280 and Glu282.

This sequence belongs to the NAD-dependent glycerol-3-phosphate dehydrogenase family.

It is found in the cytoplasm. It catalyses the reaction sn-glycerol 3-phosphate + NAD(+) = dihydroxyacetone phosphate + NADH + H(+). The catalysed reaction is sn-glycerol 3-phosphate + NADP(+) = dihydroxyacetone phosphate + NADPH + H(+). The protein operates within membrane lipid metabolism; glycerophospholipid metabolism. Functionally, catalyzes the reduction of the glycolytic intermediate dihydroxyacetone phosphate (DHAP) to sn-glycerol 3-phosphate (G3P), the key precursor for phospholipid synthesis. This Bacillus cytotoxicus (strain DSM 22905 / CIP 110041 / 391-98 / NVH 391-98) protein is Glycerol-3-phosphate dehydrogenase [NAD(P)+].